Reading from the N-terminus, the 481-residue chain is Dual specificity protein kinase CLK4 (481 aa).

Disordered regions lie at residues 1 to 46 (MRHS…CKPH) and 102 to 143 (SKSS…EDDE). Over residues 8 to 24 (HCPDWDSRESWGHESYR) the composition is skewed to basic and acidic residues. Basic residues-rich tracts occupy residues 25–34 (GSHKRKRRSH) and 106–136 (VRSRRSSPKRKRNRHCSSHQSRSKSHRRKRS). 2 positions are modified to phosphoserine: S136 and S138. The 317-residue stretch at 159-475 (YEIVDTLGEG…LDEALQHPFF (317 aa)) folds into the Protein kinase domain. ATP-binding positions include 165-173 (LGEGAFGKV) and K189. The Proton acceptor role is filled by D286.

Belongs to the protein kinase superfamily. CMGC Ser/Thr protein kinase family. Lammer subfamily. Interacts with UBL5. Autophosphorylates on all three types of residues. As to expression, expressed in liver, kidney, heart, muscle, brain and endothelial cells.

Its subcellular location is the nucleus. The catalysed reaction is L-seryl-[protein] + ATP = O-phospho-L-seryl-[protein] + ADP + H(+). The enzyme catalyses L-threonyl-[protein] + ATP = O-phospho-L-threonyl-[protein] + ADP + H(+). It carries out the reaction L-tyrosyl-[protein] + ATP = O-phospho-L-tyrosyl-[protein] + ADP + H(+). Its activity is regulated as follows. TG003 inhibits its kinase activity and affects the regulation of alternative splicing mediated by phosphorylation of SR proteins. Its function is as follows. Dual specificity kinase acting on both serine/threonine and tyrosine-containing substrates. Phosphorylates serine- and arginine-rich (SR) proteins of the spliceosomal complex and may be a constituent of a network of regulatory mechanisms that enable SR proteins to control RNA splicing. Phosphorylates SRSF1 and SRSF3. Required for the regulation of alternative splicing of MAPT/TAU. Regulates the alternative splicing of tissue factor (F3) pre-mRNA in endothelial cells. The protein is Dual specificity protein kinase CLK4 (CLK4) of Homo sapiens (Human).